The chain runs to 294 residues: N-acetylmuramic acid 6-phosphate etherase (294 aa).

The SIS domain occupies 54 to 217 (VIQSFEEEGR…STASMIGVGK (164 aa)). Catalysis depends on Glu-82, which acts as the Proton donor. Glu-113 is a catalytic residue.

The protein belongs to the GCKR-like family. MurNAc-6-P etherase subfamily. As to quaternary structure, homodimer.

The enzyme catalyses N-acetyl-D-muramate 6-phosphate + H2O = N-acetyl-D-glucosamine 6-phosphate + (R)-lactate. It functions in the pathway amino-sugar metabolism; N-acetylmuramate degradation. Functionally, specifically catalyzes the cleavage of the D-lactyl ether substituent of MurNAc 6-phosphate, producing GlcNAc 6-phosphate and D-lactate. This is N-acetylmuramic acid 6-phosphate etherase from Bacillus anthracis (strain A0248).